Here is a 174-residue protein sequence, read N- to C-terminus: UPF0316 protein lwe1794 (174 aa).

Transmembrane regions (helical) follow at residues 4–24 (GLFI…IYTV), 36–56 (LAAL…SLVL), and 62–82 (IANV…GMKI).

Belongs to the UPF0316 family.

The protein resides in the cell membrane. This Listeria welshimeri serovar 6b (strain ATCC 35897 / DSM 20650 / CCUG 15529 / CIP 8149 / NCTC 11857 / SLCC 5334 / V8) protein is UPF0316 protein lwe1794.